The chain runs to 108 residues: Urease subunit beta (108 aa).

Belongs to the urease beta subunit family. Heterotrimer of UreA (gamma), UreB (beta) and UreC (alpha) subunits. Three heterotrimers associate to form the active enzyme.

The protein localises to the cytoplasm. The catalysed reaction is urea + 2 H2O + H(+) = hydrogencarbonate + 2 NH4(+). It participates in nitrogen metabolism; urea degradation; CO(2) and NH(3) from urea (urease route): step 1/1. This is Urease subunit beta from Proteus hauseri.